A 238-amino-acid chain; its full sequence is CS1 fimbrial subunit B (238 aa).

Positions 1 to 17 (MRKLFLSLLMIPFVAKA) are cleaved as a signal peptide.

It localises to the fimbrium. Functionally, might function as a shuttle protein in the transport of fimbria through the periplasmic space or might function as an adhesin. This chain is CS1 fimbrial subunit B (csoB), found in Escherichia coli.